Consider the following 351-residue polypeptide: Biotin synthase (351 aa).

A Radical SAM core domain is found at 44–262 (NRVQVSTLLS…LAVARILMPQ (219 aa)). Positions 59, 63, and 66 each coordinate [4Fe-4S] cluster. Positions 103, 134, 194, and 266 each coordinate [2Fe-2S] cluster.

This sequence belongs to the radical SAM superfamily. Biotin synthase family. In terms of assembly, homodimer. [4Fe-4S] cluster is required as a cofactor. Requires [2Fe-2S] cluster as cofactor.

It carries out the reaction (4R,5S)-dethiobiotin + (sulfur carrier)-SH + 2 reduced [2Fe-2S]-[ferredoxin] + 2 S-adenosyl-L-methionine = (sulfur carrier)-H + biotin + 2 5'-deoxyadenosine + 2 L-methionine + 2 oxidized [2Fe-2S]-[ferredoxin]. It functions in the pathway cofactor biosynthesis; biotin biosynthesis; biotin from 7,8-diaminononanoate: step 2/2. In terms of biological role, catalyzes the conversion of dethiobiotin (DTB) to biotin by the insertion of a sulfur atom into dethiobiotin via a radical-based mechanism. This is Biotin synthase from Pseudomonas fluorescens (strain Pf0-1).